The sequence spans 61 residues: Small ribosomal subunit protein uS14 (61 aa).

The Zn(2+) site is built by cysteine 24, cysteine 27, cysteine 40, and cysteine 43.

It belongs to the universal ribosomal protein uS14 family. Zinc-binding uS14 subfamily. As to quaternary structure, part of the 30S ribosomal subunit. Contacts proteins S3 and S10. Zn(2+) is required as a cofactor.

Its function is as follows. Binds 16S rRNA, required for the assembly of 30S particles and may also be responsible for determining the conformation of the 16S rRNA at the A site. The sequence is that of Small ribosomal subunit protein uS14 from Helicobacter pylori (strain G27).